We begin with the raw amino-acid sequence, 340 residues long: Ketol-acid reductoisomerase (NADP(+)) (340 aa).

Residues 1–182 (MRVYYDRDCD…GGGRSGIIET (182 aa)) form the KARI N-terminal Rossmann domain. NADP(+) contacts are provided by residues 24-27 (YGSQ), Arg48, Ser51, Ser53, and 83-86 (DELQ). His108 is a catalytic residue. Gly134 contacts NADP(+). The KARI C-terminal knotted domain occupies 183-329 (NFREECETDL…ETLRGMMPWI (147 aa)). Residues Asp191, Glu195, Glu227, and Glu231 each coordinate Mg(2+). Ser252 provides a ligand contact to substrate.

Belongs to the ketol-acid reductoisomerase family. It depends on Mg(2+) as a cofactor.

It catalyses the reaction (2R)-2,3-dihydroxy-3-methylbutanoate + NADP(+) = (2S)-2-acetolactate + NADPH + H(+). It carries out the reaction (2R,3R)-2,3-dihydroxy-3-methylpentanoate + NADP(+) = (S)-2-ethyl-2-hydroxy-3-oxobutanoate + NADPH + H(+). It participates in amino-acid biosynthesis; L-isoleucine biosynthesis; L-isoleucine from 2-oxobutanoate: step 2/4. Its pathway is amino-acid biosynthesis; L-valine biosynthesis; L-valine from pyruvate: step 2/4. Its function is as follows. Involved in the biosynthesis of branched-chain amino acids (BCAA). Catalyzes an alkyl-migration followed by a ketol-acid reduction of (S)-2-acetolactate (S2AL) to yield (R)-2,3-dihydroxy-isovalerate. In the isomerase reaction, S2AL is rearranged via a Mg-dependent methyl migration to produce 3-hydroxy-3-methyl-2-ketobutyrate (HMKB). In the reductase reaction, this 2-ketoacid undergoes a metal-dependent reduction by NADPH to yield (R)-2,3-dihydroxy-isovalerate. This is Ketol-acid reductoisomerase (NADP(+)) from Roseobacter denitrificans (strain ATCC 33942 / OCh 114) (Erythrobacter sp. (strain OCh 114)).